The chain runs to 110 residues: Small ribosomal subunit protein bS16 (110 aa).

Residues 87-110 are disordered; sequence ARNNPEKAVPRKERKAAAEAAAKK.

Belongs to the bacterial ribosomal protein bS16 family.

The polypeptide is Small ribosomal subunit protein bS16 (Rhodopseudomonas palustris (strain BisA53)).